We begin with the raw amino-acid sequence, 161 residues long: Non-secretory ribonuclease (161 aa).

Positions 1 to 27 (MVPKLFTSQICLLLLLGLLAVEGSLHV) are cleaved as a signal peptide. C-linked (Man) tryptophan glycosylation is present at Trp-34. His-42 functions as the Proton acceptor in the catalytic mechanism. A glycan (N-linked (GlcNAc...) asparagine) is linked at Asn-44. Disulfide bonds link Cys-50–Cys-110, Cys-64–Cys-123, Cys-82–Cys-138, and Cys-89–Cys-98. The residue at position 60 (Tyr-60) is a 3'-nitrotyrosine. 65–69 (KNQNT) is a binding site for substrate. Residues Asn-86, Asn-92, Asn-111, and Asn-119 are each glycosylated (N-linked (GlcNAc...) asparagine). The active-site Proton donor is His-156.

This sequence belongs to the pancreatic ribonuclease family. As to quaternary structure, interacts with and forms a tight 1:1 complex with RNH1. Dimerization of two such complexes may occur.

It is found in the lysosome. The protein resides in the cytoplasmic granule. It catalyses the reaction an [RNA] containing cytidine + H2O = an [RNA]-3'-cytidine-3'-phosphate + a 5'-hydroxy-ribonucleotide-3'-[RNA].. It carries out the reaction an [RNA] containing uridine + H2O = an [RNA]-3'-uridine-3'-phosphate + a 5'-hydroxy-ribonucleotide-3'-[RNA].. This is a non-secretory ribonuclease. It is a pyrimidine specific nuclease with a slight preference for U. Cytotoxin and helminthotoxin. Possesses a wide variety of biological activities. This is Non-secretory ribonuclease (RNASE2) from Gorilla gorilla gorilla (Western lowland gorilla).